A 270-amino-acid polypeptide reads, in one-letter code: 1-deoxy-11-beta-hydroxypentalenate dehydrogenase (270 aa).

12–36 (GAASGIGFALSARLAQAGARVVMTD) is an NAD(+) binding site. Ser-144 provides a ligand contact to substrate. Residue Tyr-157 is the Proton acceptor of the active site. Residue Lys-161 coordinates NAD(+).

Belongs to the short-chain dehydrogenases/reductases (SDR) family.

It carries out the reaction 1-deoxy-11beta-hydroxypentalenate + NAD(+) = 1-deoxy-11-oxopentalenate + NADH + H(+). It functions in the pathway antibiotic biosynthesis; neopentalenolactone biosynthesis. In terms of biological role, catalyzes the oxidation of 1-deoxy-11-beta-hydroxypentalenic acid to 1-deoxy-11-oxopentalenic acid in the biosynthesis of neopentalenolactone antibiotic. The protein is 1-deoxy-11-beta-hydroxypentalenate dehydrogenase (ptlF) of Streptomyces avermitilis (strain ATCC 31267 / DSM 46492 / JCM 5070 / NBRC 14893 / NCIMB 12804 / NRRL 8165 / MA-4680).